The primary structure comprises 353 residues: Photosystem II D2 protein (353 aa).

Residue Thr-2 is modified to N-acetylthreonine. Position 2 is a phosphothreonine (Thr-2). A helical membrane pass occupies residues 41-61; the sequence is CAYFALGGWFTGTTFVTSWYT. His-118 is a binding site for chlorophyll a. The chain crosses the membrane as a helical span at residues 125–141; it reads GFMLRQFELARSVQLRP. Pheophytin a is bound by residues Gln-130 and Asn-143. Residues 153-166 form a helical membrane-spanning segment; sequence VFVSVFLIYPLGQS. Residue His-198 coordinates chlorophyll a. A helical transmembrane segment spans residues 208–228; it reads AALLCAIHGATVENTLFEDGD. Positions 215 and 262 each coordinate a plastoquinone. A Fe cation-binding site is contributed by His-215. His-269 serves as a coordination point for Fe cation. Residues 279–295 form a helical membrane-spanning segment; the sequence is GLWMSALGVVGLALNLR.

Belongs to the reaction center PufL/M/PsbA/D family. PSII is composed of 1 copy each of membrane proteins PsbA, PsbB, PsbC, PsbD, PsbE, PsbF, PsbH, PsbI, PsbJ, PsbK, PsbL, PsbM, PsbT, PsbX, PsbY, PsbZ, Psb30/Ycf12, at least 3 peripheral proteins of the oxygen-evolving complex and a large number of cofactors. It forms dimeric complexes. The D1/D2 heterodimer binds P680, chlorophylls that are the primary electron donor of PSII, and subsequent electron acceptors. It shares a non-heme iron and each subunit binds pheophytin, quinone, additional chlorophylls, carotenoids and lipids. There is also a Cl(-1) ion associated with D1 and D2, which is required for oxygen evolution. The PSII complex binds additional chlorophylls, carotenoids and specific lipids. is required as a cofactor.

It localises to the plastid. The protein localises to the chloroplast thylakoid membrane. The catalysed reaction is 2 a plastoquinone + 4 hnu + 2 H2O = 2 a plastoquinol + O2. In terms of biological role, photosystem II (PSII) is a light-driven water:plastoquinone oxidoreductase that uses light energy to abstract electrons from H(2)O, generating O(2) and a proton gradient subsequently used for ATP formation. It consists of a core antenna complex that captures photons, and an electron transfer chain that converts photonic excitation into a charge separation. The D1/D2 (PsbA/PsbD) reaction center heterodimer binds P680, the primary electron donor of PSII as well as several subsequent electron acceptors. D2 is needed for assembly of a stable PSII complex. This Ceratophyllum demersum (Rigid hornwort) protein is Photosystem II D2 protein.